We begin with the raw amino-acid sequence, 1148 residues long: Envelopment polyprotein (1148 aa).

Residues 1-23 form the signal peptide; the sequence is MGELSPVCLYLLLQGLLLCNTGA. The Lumenal portion of the chain corresponds to 24–495; that stretch reads ARNLNELKME…VPGLHGWATM (472 aa). Disulfide bonds link C34–C159, C68–C165, C117–C136, C141–C146, C183–C193, and C218–C257. N142 carries an N-linked (GlcNAc...) asparagine; by host glycan. An N-linked (GlcNAc...) asparagine; by host glycan is attached at N357. 4 disulfide bridges follow: C386/C445, C390/C399, C415/C434, and C462/C485. N409 is a glycosylation site (N-linked (GlcNAc...) asparagine; by host). The chain crosses the membrane as a helical span at residues 496–516; it reads LLLLTFCFGWVLIPTITMILL. Residues 517-637 are Cytoplasmic-facing; sequence KILIAFAYLC…LSLFRYRSRF (121 aa). The binding to the ribonucleoprotein stretch occupies residues 526 to 543; the sequence is CSKYNTDSKFRILIEKVK. 2 consecutive CCHC-type zinc fingers follow at residues 555 to 575 and 580 to 601; these read CEVC…RKSC and CPYC…FKVC. Binding to the ribonucleoprotein stretches follow at residues 598–615, 602–613, and 621–635; these read FKVC…RKSL, KLRSRFQENLRK, and MQGC…RYRS. In terms of domain architecture, ITAM spans 621 to 644; the sequence is MQGCYRTLSLFRYRSRFFVGLVWC. The YxxL motif lies at 625–628; that stretch reads YRTL. The helical transmembrane segment at 638–658 threads the bilayer; the sequence is FVGLVWCVLLVHHLIVWAASA. Residues 659 to 1114 lie on the Lumenal side of the membrane; sequence ETQNLNAGWT…EWILGVLNGN (456 aa). 8 disulfides stabilise this stretch: C745–C780, C749–C787, C761–C894, C775–C905, C790–C913, C816–C825, C833–C842, and C873–C877. The fusion loop stretch occupies residues 767–787; it reads YEYETGWGCNPPDCPGVGTGC. A glycan (N-linked (GlcNAc...) asparagine; by host) is linked at N937. Cystine bridges form between C979-C1009, C1002-C1054, C1019-C1024, C1055-C1060, and C1094-C1098. The helical transmembrane segment at 1115 to 1135 threads the bilayer; sequence WMVVAVLVVLLILSILLFTLC. Binding to the ribonucleoprotein stretches follow at residues 1131–1143 and 1131–1148; these read LFTL…PSYR and LFTL…EHKP. Topologically, residues 1136–1148 are cytoplasmic; the sequence is CPRRPSYRKEHKP.

This sequence belongs to the hantavirus envelope glycoprotein family. In terms of assembly, homodimer. Homotetramer; forms heterotetrameric Gn-Gc spikes in the pre-fusion conformation. Interacts (via C-terminus) with the nucleoprotein. Interacts with host TUFM; this interaction contributes to the virus-induced degradation of mitochondria by autophagy, which leads to degradation of host MAVS and inhibition of type I interferon (IFN) responses. Interacts with host MAP1LC3B; this interaction contributes to the virus-induced degradation of mitochondria by autophagy, which leads to degradation of host MAVS and inhibition of type I interferon (IFN) responses. Homodimer. Homotetramer; forms heterotetrameric Gn-Gc spikes in the pre-fusion conformation. Homotrimer; forms homotrimer in the post-fusion conformation at acidic pH. Interacts (via C-terminus) with the nucleoprotein. Post-translationally, envelope polyprotein precursor is quickly cleaved in vivo just after synthesis, presumably by host signal peptidase.

The protein resides in the virion membrane. It is found in the host cell surface. The protein localises to the host Golgi apparatus membrane. Its subcellular location is the host endoplasmic reticulum membrane. It localises to the host mitochondrion. In terms of biological role, forms homotetramers with glycoprotein C at the surface of the virion. Attaches the virion to host cell receptors including integrin ITGAV/ITGB3. This attachment induces virion internalization predominantly through clathrin-dependent endocytosis. Mediates the assembly and budding of infectious virus particles through its interaction with the nucleocapsid protein and the viral genome. May dysregulate normal immune and endothelial cell responses through an ITAM motif. Translocates to mitochondria, binds to host TUFM and recruits MAP1LC3B. These interactions induce mitochondrial autophagy and therefore destruction of host MAVS leading to inhibition of type I interferon (IFN) responses. Concomitant breakdown of glycoprotein N is apparently prevented by the nucleoprotein that may inhibit Gn-stimulated autophagosome-lysosome fusion. Interacts with the viral genomic RNA. Functionally, forms homotetramers with glycoprotein N at the surface of the virion. Attaches the virion to host cell receptors including integrin ITGAV/ITGB3. This attachment induces virion internalization predominantly through clathrin-dependent endocytosis. Class II fusion protein that promotes fusion of viral membrane with host endosomal membrane after endocytosis of the virion. The sequence is that of Envelopment polyprotein (GP) from Homo sapiens (Human).